The chain runs to 179 residues: Large ribosomal subunit protein uL5 (179 aa).

Belongs to the universal ribosomal protein uL5 family. As to quaternary structure, part of the 50S ribosomal subunit; part of the 5S rRNA/L5/L18/L25 subcomplex. Contacts the 5S rRNA and the P site tRNA. Forms a bridge to the 30S subunit in the 70S ribosome.

In terms of biological role, this is one of the proteins that bind and probably mediate the attachment of the 5S RNA into the large ribosomal subunit, where it forms part of the central protuberance. In the 70S ribosome it contacts protein S13 of the 30S subunit (bridge B1b), connecting the 2 subunits; this bridge is implicated in subunit movement. Contacts the P site tRNA; the 5S rRNA and some of its associated proteins might help stabilize positioning of ribosome-bound tRNAs. The chain is Large ribosomal subunit protein uL5 from Pseudomonas putida (strain ATCC 700007 / DSM 6899 / JCM 31910 / BCRC 17059 / LMG 24140 / F1).